We begin with the raw amino-acid sequence, 182 residues long: Transmembrane protein 11 homolog, mitochondrial (182 aa).

S25 carries the phosphoserine modification. 2 helical membrane passes run 70–89 (TAVA…RDRP) and 91–108 (IAAP…LYTV).

This sequence belongs to the TMEM11 family.

Its subcellular location is the mitochondrion inner membrane. Its function is as follows. Plays a role in mitochondrial morphogenesis. The chain is Transmembrane protein 11 homolog, mitochondrial (Pmi) from Drosophila melanogaster (Fruit fly).